Consider the following 501-residue polypeptide: Oxygen-independent coproporphyrinogen-III oxidase-like protein HemZ (501 aa).

Residues 163 to 405 (DLYRVKDEVS…VAWTKEHGYV (243 aa)) enclose the Radical SAM core domain. Residue Tyr174 participates in S-adenosyl-L-methionine binding. [4Fe-4S] cluster-binding residues include Cys180 and Cys184. Tyr186 contacts S-adenosyl-L-methionine. Cys187 is a binding site for [4Fe-4S] cluster. S-adenosyl-L-methionine is bound by residues Gly233, 234 to 235 (GT), Glu267, Gln295, Arg307, and Asp332.

This sequence belongs to the anaerobic coproporphyrinogen-III oxidase family. HemZ subfamily. [4Fe-4S] cluster is required as a cofactor.

Its pathway is porphyrin-containing compound metabolism; protoporphyrin-IX biosynthesis. Functionally, involved in the biosynthesis of porphyrin-containing compound. This Bacillus subtilis (strain 168) protein is Oxygen-independent coproporphyrinogen-III oxidase-like protein HemZ (hemZ).